Here is a 70-residue protein sequence, read N- to C-terminus: MNLIAAAIAIGLSALGAGIGNGLIVSRTVEGVARQPEARGQLMSIMFIGIGLVEALPILGLVISFIVLFQ.

Helical transmembrane passes span 4-24 (IAAAIAIGLSALGAGIGNGLI) and 47-67 (FIGIGLVEALPILGLVISFIV).

The protein belongs to the ATPase C chain family. In terms of assembly, F-type ATPases have 2 components, F(1) - the catalytic core - and F(0) - the membrane proton channel. F(1) has five subunits: alpha(3), beta(3), gamma(1), delta(1), epsilon(1). F(0) has three main subunits: a(1), b(2) and c(10-14). The alpha and beta chains form an alternating ring which encloses part of the gamma chain. F(1) is attached to F(0) by a central stalk formed by the gamma and epsilon chains, while a peripheral stalk is formed by the delta and b chains.

It localises to the cell membrane. F(1)F(0) ATP synthase produces ATP from ADP in the presence of a proton or sodium gradient. F-type ATPases consist of two structural domains, F(1) containing the extramembraneous catalytic core and F(0) containing the membrane proton channel, linked together by a central stalk and a peripheral stalk. During catalysis, ATP synthesis in the catalytic domain of F(1) is coupled via a rotary mechanism of the central stalk subunits to proton translocation. Its function is as follows. Key component of the F(0) channel; it plays a direct role in translocation across the membrane. A homomeric c-ring of between 10-14 subunits forms the central stalk rotor element with the F(1) delta and epsilon subunits. In Staphylococcus carnosus (strain TM300), this protein is ATP synthase subunit c.